A 251-amino-acid chain; its full sequence is Protein crossbronx (251 aa).

Residues 20–176 (QQEYKILAEY…TRENIRESLA (157 aa)) form the UBC core domain. Positions 211–251 (QSKHLESQSQQSNNGGNGGGGGAATGLSWVKEGEFKPLSVE) are disordered. A compositionally biased stretch (gly residues) spans 225-234 (GGNGGGGGAA).

It belongs to the ubiquitin-conjugating enzyme family. FTS subfamily.

The chain is Protein crossbronx (cbx) from Drosophila willistoni (Fruit fly).